Here is a 256-residue protein sequence, read N- to C-terminus: BI1-like protein (256 aa).

The next 7 helical transmembrane spans lie at 53–73, 85–105, 113–133, 138–158, 167–187, 189–209, and 228–248; these read VYGILSAQLLLTTLISAVVVL, PGILLFLCIVPFILIWPLHIY, LILLALFTVSLSFTVGVSCAM, IVLQALILTLSVVGSLTAYTF, FSFLGPILFTSLIILVVTSFI, MFFPLGPTSVAVYGGFSALVF, and EYILASVALYLDILNLFLTIL.

It belongs to the BI1 family.

The protein resides in the membrane. The polypeptide is BI1-like protein (Arabidopsis thaliana (Mouse-ear cress)).